The following is a 227-amino-acid chain: Esterase OVCA2 (227 aa).

Catalysis depends on charge relay system residues Ser120, Asp180, and His207.

This sequence belongs to the LovG family.

The enzyme catalyses a carboxylic ester + H2O = an alcohol + a carboxylate + H(+). Functionally, exhibits ester hydrolase activity with a strong preference for long-chain alkyl ester substrates and high selectivity against a variety of short, branched, and substituted esters. Is able to hydrolyze ester bonds within a wide range of p-nitrophenyl derivatives (C2-C14) in vitro, with a strong preference toward substrates of &gt;8 carbons. The sequence is that of Esterase OVCA2 (ovca2) from Danio rerio (Zebrafish).